The following is a 775-amino-acid chain: MKFLSLLLLAGIAQAIVPPREPRPPTGGGNKLLTYKECVPRATISPRSTSLAWINSDEDGQYISQSDDGALILQNIVTNTNKTLVAADKVPKGYYDYWFKPDLSAVLWATNYTKQYRHSYFANYFILDIEKGSLTPLAQDQAGDIQYAQWSPVDNSIAYVRGNDLYIWNNGTTKRTTENGGPDIFNGVPDWVYEEEIFGDRFALWFSPDGEYLAYLRFNETGVPTYTIPYYKNKQKIAPAYPRELEIRYPKVSAKNPTVQFHLLNIASSQESTIPVTAFPENDLVIGEVAWLSSGHDSVAYRAFNRVQDREKIVSIKVESKESKVIRERDGTDGWIDNLLSMSYIGDVNGKEYYVDISDASGWAHIYLYPVDGGKEIALTKGEWEVVAILKVDTKKKLIYFTSTKYHSTTRHVYSVSYDTNVMTPLVNDKEAAYYTASFSAKGGYYILSYQGPNVPYQELYSTKDSKKPLKTITSNDALLEKLKEYKLPKVSFFEIKLPSGETLNVKQRLPPNFNPHKKYPVLFTPYGGPGAQEVSQAWNSLDFKSYITSDPELEYVTWTVDNRGTGYKGRKFRSAVAKRLGFLEAQDQVFAAKELLKNRWADKDHIGIWGWSYGGFLTAKTLETDSGVFTFGISTAPVSDFRLYDSMYTERYMKTVELNADGYSETAVHKVDGFKNLKGHYLIQHGTGDDNVHFQNAAVLSNTLMNGGVTADKLTTQWFTDSDHGIRYDMDSTYQYKQLAKMVYDQKQRRPERPPMHQWSKRVLAALFGERAEE.

The first 15 residues, 1–15, serve as a signal peptide directing secretion; the sequence is MKFLSLLLLAGIAQA. Residues asparagine 81, asparagine 111, asparagine 170, and asparagine 219 are each glycosylated (N-linked (GlcNAc...) asparagine). Active-site charge relay system residues include serine 613, aspartate 690, and histidine 725.

This sequence belongs to the peptidase S9B family.

Its subcellular location is the secreted. It carries out the reaction Release of an N-terminal dipeptide, Xaa-Yaa-|-Zaa-, from a polypeptide, preferentially when Yaa is Pro, provided Zaa is neither Pro nor hydroxyproline.. Extracellular dipeptidyl-peptidase which removes N-terminal dipeptides sequentially from polypeptides having unsubstituted N-termini provided that the penultimate residue is proline. Contributes to pathogenicity. The polypeptide is Dipeptidyl peptidase 4 (DPP4) (Trichophyton equinum (Horse ringworm fungus)).